A 146-amino-acid chain; its full sequence is Large ribosomal subunit protein bL19 (146 aa).

It belongs to the bacterial ribosomal protein bL19 family.

Functionally, this protein is located at the 30S-50S ribosomal subunit interface and may play a role in the structure and function of the aminoacyl-tRNA binding site. The chain is Large ribosomal subunit protein bL19 from Bartonella bacilliformis (strain ATCC 35685 / KC583 / Herrer 020/F12,63).